Here is a 467-residue protein sequence, read N- to C-terminus: Chromosomal replication initiator protein DnaA (467 aa).

The tract at residues M1–S80 is domain I, interacts with DnaA modulators. Residues S80–S130 form a domain II region. The segment at Y131–A347 is domain III, AAA+ region. The ATP site is built by G175, G177, K178, and T179. The interval H348–S467 is domain IV, binds dsDNA.

Belongs to the DnaA family. Oligomerizes as a right-handed, spiral filament on DNA at oriC.

The protein resides in the cytoplasm. Plays an essential role in the initiation and regulation of chromosomal replication. ATP-DnaA binds to the origin of replication (oriC) to initiate formation of the DNA replication initiation complex once per cell cycle. Binds the DnaA box (a 9 base pair repeat at the origin) and separates the double-stranded (ds)DNA. Forms a right-handed helical filament on oriC DNA; dsDNA binds to the exterior of the filament while single-stranded (ss)DNA is stabiized in the filament's interior. The ATP-DnaA-oriC complex binds and stabilizes one strand of the AT-rich DNA unwinding element (DUE), permitting loading of DNA polymerase. After initiation quickly degrades to an ADP-DnaA complex that is not apt for DNA replication. Binds acidic phospholipids. The chain is Chromosomal replication initiator protein DnaA from Hahella chejuensis (strain KCTC 2396).